The following is a 300-amino-acid chain: Glutamyl-Q tRNA(Asp) synthetase (300 aa).

Residues 8–12 (RFAPT) and Asp44 contribute to the L-glutamate site. The 'HIGH' region motif lies at 11 to 21 (PTPSGDLHLGS). Residues Cys100, Cys102, Tyr122, and Cys126 each coordinate Zn(2+). L-glutamate is bound by residues Tyr181 and Arg199. Positions 237 to 241 (KLSKQ) match the 'KMSKS' region motif. Residue Lys240 coordinates ATP.

Belongs to the class-I aminoacyl-tRNA synthetase family. GluQ subfamily. It depends on Zn(2+) as a cofactor.

Catalyzes the tRNA-independent activation of glutamate in presence of ATP and the subsequent transfer of glutamate onto a tRNA(Asp). Glutamate is transferred on the 2-amino-5-(4,5-dihydroxy-2-cyclopenten-1-yl) moiety of the queuosine in the wobble position of the QUC anticodon. This is Glutamyl-Q tRNA(Asp) synthetase from Synechococcus sp. (strain ATCC 27144 / PCC 6301 / SAUG 1402/1) (Anacystis nidulans).